Consider the following 604-residue polypeptide: MGAALGTGARLTSVPRIACSSLRRQAPSAPAQGCHSKSGPPRPVPLKKRGYDVTRNPHLNKGMAFTLEERLQLGIHGLIPPCFLSQDVQLLRIMRYYENQQSDLDKYIILMTLQDRNEKLFYRVLTSDVEKFMPIVYTPTVGLACQHYGLTFRRPRGLFITIHDKGHIATMLNSWPEDNIKAVVVTDGERILGLGDLGCYGMGIPVGKLALYTACGGVNPQQCLPVLLDVGTNNEELLRDPLYIGLKHQRVRGEEYDDLLDEFMQAVTDKFGINCLIQFEDFANANAFRLLNKYRNKYCMFNDDIQGTASVAVAGILAALRITKNRLSNHVFVFQGAGEAAMGIAHLLVMALEKEGIPKTEAIKKIWMVDSKGLIVKGRSHLNHEKEMFAQDHPEVNSLEEVVRLVKPTAIIGVAAIAGAFTEQILRDMASFHERPIVFALSNPTSKAECTAEKCYRVTEGRGIFASGSPFKSVTLEDGRTFTPGQGNNAYVFPGVALGVIAGGIRHIPDEIFLLTAEQIAQEVSEQHLSQGRLYPPLSTIRDVSLRIAVKVLDYAYKHNLASYYPEPKDKEAFVKSLIYTPDYDSFSLDTYSWPKEAMSVQKV.

Positions 28–50 (SAPAQGCHSKSGPPRPVPLKKRG) are disordered. Tyrosine 137 functions as the Proton donor in the catalytic mechanism. NADP(+) is bound at residue arginine 190. The active-site Proton acceptor is lysine 208. A divalent metal cation-binding residues include glutamate 280, aspartate 281, and aspartate 304. Aspartate 304 serves as a coordination point for NADP(+). At serine 371 the chain carries Phosphoserine. Position 443 (asparagine 443) interacts with NADP(+).

The protein belongs to the malic enzymes family. Mg(2+) is required as a cofactor. Requires Mn(2+) as cofactor.

The protein localises to the mitochondrion matrix. It carries out the reaction (S)-malate + NADP(+) = pyruvate + CO2 + NADPH. The catalysed reaction is oxaloacetate + H(+) = pyruvate + CO2. The polypeptide is NADP-dependent malic enzyme, mitochondrial (Me3) (Mus musculus (Mouse)).